Consider the following 376-residue polypeptide: MIPFNAPPVVGTELDYMQSAMGSGKLCGDGGFTRRCQQWLEQRFGSAKVLLTPSCTASLEMAALLLDIQPGDEVIMPSYTFVSTANAFVLRGAKIVFVDVRPDTMNIDETLIEAAITDKTRVIVPVHYAGVACEMDTIMALAKKHNLFVVEDAAQGVMSTYKGRALGTIGHIGCFSFHETKNYTAGGEGGATLINDKALIERAEIIREKGTNRSQFFRGQVDKYTWRDIGSSYLMSDLQAAYLWAQLEAADRINQQRLALWQNYYDALAPLAKAGRIELPSIPDGCVQNAHMFYIKLRDIDDRSALINFLKEAEIMAVFHYIPLHGCPAGEHFGEFHGEDRYTTKESERLLRLPLFYNLSPVNQRTVIATLLNYFS.

Lys181 carries the post-translational modification N6-(pyridoxal phosphate)lysine.

Belongs to the DegT/DnrJ/EryC1 family. As to quaternary structure, homotetramer. Requires pyridoxal 5'-phosphate as cofactor.

It catalyses the reaction dTDP-4-amino-4,6-dideoxy-alpha-D-galactose + 2-oxoglutarate = dTDP-4-dehydro-6-deoxy-alpha-D-glucose + L-glutamate. The protein operates within bacterial outer membrane biogenesis; enterobacterial common antigen biosynthesis. Its function is as follows. Catalyzes the synthesis of dTDP-4-amino-4,6-dideoxy-D-galactose (dTDP-Fuc4N) from dTDP-4-keto-6-deoxy-D-glucose (dTDP-D-Glc4O) and L-glutamate. The polypeptide is dTDP-4-amino-4,6-dideoxygalactose transaminase (Escherichia coli (strain K12)).